A 314-amino-acid chain; its full sequence is Aspartate carbamoyltransferase catalytic subunit (314 aa).

Residues Arg-53 and Thr-54 each coordinate carbamoyl phosphate. An L-aspartate-binding site is contributed by Lys-82. Carbamoyl phosphate is bound by residues Arg-103, His-131, and Gln-134. Residues Arg-164 and Arg-230 each coordinate L-aspartate. Leu-267 and Pro-268 together coordinate carbamoyl phosphate.

Belongs to the aspartate/ornithine carbamoyltransferase superfamily. ATCase family. In terms of assembly, heterooligomer of catalytic and regulatory chains.

The catalysed reaction is carbamoyl phosphate + L-aspartate = N-carbamoyl-L-aspartate + phosphate + H(+). Its pathway is pyrimidine metabolism; UMP biosynthesis via de novo pathway; (S)-dihydroorotate from bicarbonate: step 2/3. Functionally, catalyzes the condensation of carbamoyl phosphate and aspartate to form carbamoyl aspartate and inorganic phosphate, the committed step in the de novo pyrimidine nucleotide biosynthesis pathway. This Methanococcus aeolicus (strain ATCC BAA-1280 / DSM 17508 / OCM 812 / Nankai-3) protein is Aspartate carbamoyltransferase catalytic subunit.